Reading from the N-terminus, the 243-residue chain is UPF0758 protein SYNPCC7002_A0220 (243 aa).

The 124-residue stretch at 112–235 (IIVDSPEAAA…FGSLRQKTAL (124 aa)) folds into the MPN domain. Positions 184, 186, and 197 each coordinate Zn(2+). The JAMM motif signature appears at 184–197 (HNHPSGNVDPSPED).

It belongs to the UPF0758 family.

The sequence is that of UPF0758 protein SYNPCC7002_A0220 from Picosynechococcus sp. (strain ATCC 27264 / PCC 7002 / PR-6) (Agmenellum quadruplicatum).